A 252-amino-acid polypeptide reads, in one-letter code: Triosephosphate isomerase (252 aa).

Residue 9–11 coordinates substrate; that stretch reads NWK. The active-site Electrophile is the histidine 96. The Proton acceptor role is filled by glutamate 166. Residues glycine 172, serine 212, and 233–234 each bind substrate; that span reads GG.

This sequence belongs to the triosephosphate isomerase family. Homodimer.

It is found in the cytoplasm. The enzyme catalyses D-glyceraldehyde 3-phosphate = dihydroxyacetone phosphate. The protein operates within carbohydrate biosynthesis; gluconeogenesis. It functions in the pathway carbohydrate degradation; glycolysis; D-glyceraldehyde 3-phosphate from glycerone phosphate: step 1/1. Its function is as follows. Involved in the gluconeogenesis. Catalyzes stereospecifically the conversion of dihydroxyacetone phosphate (DHAP) to D-glyceraldehyde-3-phosphate (G3P). The sequence is that of Triosephosphate isomerase from Chlorobium chlorochromatii (strain CaD3).